We begin with the raw amino-acid sequence, 663 residues long: Polyunsaturated fatty acid lipoxygenase ALOX12 (663 aa).

The region spanning 2-114 (GRYRIRVATG…ILSLPEGTAR (113 aa)) is the PLAT domain. The 549-residue stretch at 115 to 663 (LPGDNALDMF…PSCIENSVTI (549 aa)) folds into the Lipoxygenase domain. Phosphoserine is present on Ser246. Positions 360, 365, 540, 544, and 663 each coordinate Fe cation.

This sequence belongs to the lipoxygenase family. Fe cation serves as cofactor. In terms of tissue distribution, expressed in vascular smooth muscle cells.

It is found in the cytoplasm. The protein localises to the cytosol. It localises to the membrane. It catalyses the reaction (5Z,8Z,11Z,14Z)-eicosatetraenoate + O2 = (12S)-hydroperoxy-(5Z,8Z,10E,14Z)-eicosatetraenoate. The catalysed reaction is (5Z,8Z,11Z,14Z)-eicosatetraenoate + O2 = (15S)-hydroperoxy-(5Z,8Z,11Z,13E)-eicosatetraenoate. It carries out the reaction 2 leukotriene A4 + O2 + 2 H2O = 2 lipoxin A4. The enzyme catalyses 2 leukotriene A4 + O2 + 2 H2O = 2 lipoxin B4. It catalyses the reaction (14S)-hydroperoxy-(4Z,7Z,10Z,12E,16Z,19Z)-docosahexaenoate = (13S,14S)-epoxy-(4Z,7Z,9E,11E,16Z,19Z)-docosahexaenoate + H2O. The catalysed reaction is N-(5Z,8Z,11Z,14Z)-eicosatetraenoyl-L-alanine + O2 = N-(15S)-hydroperoxy-(5Z,8Z,11Z,13E)-eicosatetraenoyl-alanine. It carries out the reaction N-(5Z,8Z,11Z,14Z)-eicosatetraenoyl-L-alanine + O2 = N-(12S)-hydroperoxy-(5Z,8Z,10E,14Z)-eicosatetraenoyl-alanine. The enzyme catalyses N-(5Z,8Z,11Z,14Z)-eicosatetraenoyl-gamma-aminobutanoate + O2 = N-(15S)-hydroperoxy-(5Z,8Z,11Z,13E)-eicosatetraenoyl-gamma-aminobutanoate. It catalyses the reaction N-(5Z,8Z,11Z,14Z)-eicosatetraenoyl-gamma-aminobutanoate + O2 = N-(12S)-hydroperoxy-(5Z,8Z,10E,14Z)-eicosatetraenoyl-gamma-aminobutanoate. The catalysed reaction is N-(5Z,8Z,11Z,14Z)-eicosatetraenoyl-glycine + O2 = N-(15S)-hydroperoxy-(5Z,8Z,11Z,13E)-eicosatetraenoyl-glycine. It carries out the reaction N-(5Z,8Z,11Z,14Z)-eicosatetraenoyl-glycine + O2 = N-(12S)-hydroperoxy-(5Z,8Z,10E,14Z)-eicosatetraenoyl-glycine. The enzyme catalyses N-(5Z,8Z,11Z,14Z)-eicosatetraenoyl-taurine + O2 = N-(12S)-hydroperoxy-(5Z,8Z,10E,14Z)-eicosatetraenoyl-taurine. It catalyses the reaction N-(5Z,8Z,11Z,14Z)-eicosatetraenoyl-taurine + O2 = N-(15S)-hydroperoxy-(5Z,8Z,11Z,13E)-eicosatetraenoyl-taurine. The catalysed reaction is (4Z,7Z,10Z,13Z,16Z,19Z)-docosahexaenoate + O2 = (14S)-hydroperoxy-(4Z,7Z,10Z,12E,16Z,19Z)-docosahexaenoate. It carries out the reaction (7S)-hydroperoxy-(4Z,8E,10Z,13Z,16Z,19Z)-docosahexaenoate + O2 = (7S,14S)-dihydroperoxy-(4Z,8E,10Z,12E,16Z,19Z)-docosahexaenoate. The enzyme catalyses (7S)-hydroperoxy-(4Z,8E,10Z,13Z,16Z,19Z)-docosahexaenoate + O2 = (7S,17S)-dihydroperoxy-(4Z,8E,10Z,13Z,15E,19Z)-docosahexaenoate. It catalyses the reaction (5Z,8Z,11Z,14Z,17Z)-eicosapentaenoate + O2 = (12S)-hydroperoxy-(5Z,8Z,10E,14Z,17Z)-eicosapentaenoate. The catalysed reaction is (8Z,11Z,14Z)-eicosatrienoate + O2 = (12S)-hydroperoxy-(8Z,10E,14Z)-eicosatrienoate. It carries out the reaction (9Z,12Z)-octadecadienoate + O2 = (13S)-hydroperoxy-(9Z,11E)-octadecadienoate. The enzyme catalyses (5Z,8Z,11Z)-eicosatrienoate + O2 = (12S)-hydroperoxy-(5Z,8Z,10E)-eicosatrienoate. It catalyses the reaction (14R,15S)-epoxy-(5Z,8Z,11Z)-eicosatrienoate + O2 = (12S)-hydroperoxy-(14R,15S)-epoxy-(5Z,8Z,10E)-eicosatrienoate. The catalysed reaction is (14S,15R)-epoxy-(5Z,8Z,11Z)-eicosatrienoate + O2 = (12S)-hydroperoxy-(14S,15R)-epoxy-(5Z,8Z,10E)-eicosatrienoate. It participates in lipid metabolism; hydroperoxy eicosatetraenoic acid biosynthesis. Activated by EGF. Arachidonic acid conversion is inhibited by (13S,14S)-epoxy-(4Z,7Z,9E,11E,16Z,19Z)-docosahexaenoate (13S,14S-epoxy-DHA). Arachidonate 12-lipoxygenase activity is decreased when PH decreases from 7.4 to 6. In terms of biological role, catalyzes the regio and stereo-specific incorporation of molecular oxygen into free and esterified polyunsaturated fatty acids generating lipid hydroperoxides that can be further reduced to the corresponding hydroxy species. Mainly converts arachidonate ((5Z,8Z,11Z,14Z)-eicosatetraenoate) to the specific bioactive lipid (12S)-hydroperoxyeicosatetraenoate/(12S)-HPETE. Through the production of bioactive lipids like (12S)-HPETE it regulates different biological processes including platelet activation. It can also catalyze the epoxidation of double bonds of polyunsaturated fatty acids such as (14S)-hydroperoxy-docosahexaenoate/(14S)-HPDHA resulting in the formation of (13S,14S)-epoxy-DHA. Furthermore, it may participate in the sequential oxidations of DHA ((4Z,7Z,10Z,13Z,16Z,19Z)-docosahexaenoate) to generate specialized pro-resolving mediators (SPMs) like resolvin D5 ((7S,17S)-diHPDHA) and (7S,14S)-diHPDHA, that actively down-regulate the immune response and have anti-aggregation properties with platelets. An additional function involves a multistep process by which it transforms leukotriene A4/LTA4 into the bioactive lipids lipoxin A4/LXA4 and lipoxin B4/LXB4, both are vasoactive and LXA4 may regulate neutrophil function via occupancy of specific recognition sites. Can also peroxidize linoleate ((9Z,12Z)-octadecadienoate) to (13S)-hydroperoxyoctadecadienoate/ (13S-HPODE). Due to its role in regulating both the expression of the vascular endothelial growth factor (VEGF, an angiogenic factor involved in the survival and metastasis of solid tumors) and the expression of integrin beta-1 (known to affect tumor cell migration and proliferation), it can be regarded as protumorigenic. Important for cell survival, as it may play a role not only in proliferation but also in the prevention of apoptosis in vascular smooth muscle cells. The polypeptide is Polyunsaturated fatty acid lipoxygenase ALOX12 (Homo sapiens (Human)).